We begin with the raw amino-acid sequence, 202 residues long: UDP-N-acetylglucosamine transferase subunit ALG13 (202 aa).

The protein belongs to the glycosyltransferase 28 family. In terms of assembly, heterodimer with ALG14 to form a functional enzyme.

Its subcellular location is the endoplasmic reticulum. It catalyses the reaction an N-acetyl-alpha-D-glucosaminyl-diphospho-di-trans,poly-cis-dolichol + UDP-N-acetyl-alpha-D-glucosamine = an N,N'-diacetylchitobiosyl-diphospho-di-trans,poly-cis-dolichol + UDP + H(+). Its function is as follows. Involved in protein N-glycosylation. Essential for the second step of the dolichol-linked oligosaccharide pathway. This Saccharomyces cerevisiae (strain ATCC 204508 / S288c) (Baker's yeast) protein is UDP-N-acetylglucosamine transferase subunit ALG13 (ALG13).